We begin with the raw amino-acid sequence, 356 residues long: Guanine nucleotide-binding protein alpha-15 subunit (356 aa).

A lipid anchor (N-myristoyl glycine) is attached at Gly2. The S-palmitoyl cysteine moiety is linked to residue Cys5. The region spanning 33 to 356 (GNQKLLLLGT…GRNLRGTGME (324 aa)) is the G-alpha domain. The tract at residues 36 to 49 (KLLLLGTGECGKST) is G1 motif. GTP is bound by residues 41–48 (GTGECGKS), 177–183 (LRIRIPT), 202–206 (DVGGQ), 271–274 (NKRD), and Ala328. Ser48 and Thr183 together coordinate Mg(2+). The G2 motif stretch occupies residues 175-183 (DMLRIRIPT). The segment at 198–207 (FRIYDVGGQR) is G3 motif. Residues 267–274 (ILFLNKRD) are G4 motif. Residues 326-331 (TCATDT) are G5 motif.

The protein belongs to the G-alpha family. In terms of assembly, g proteins are composed of 3 units; alpha, beta and gamma. The alpha chain contains the guanine nucleotide binding site.

In terms of biological role, guanine nucleotide-binding proteins (G proteins) are involved as modulators or transducers in various transmembrane signaling systems. In Caenorhabditis elegans, this protein is Guanine nucleotide-binding protein alpha-15 subunit (gpa-15).